Consider the following 375-residue polypeptide: MRLNELTLQHYRNYETVSLDFPKTLNLFLGENAQGKTNLLESIYVLAMTRSHRTSNEKELIGWEQAAAKISGVVEKKTGTVPLEILISNKGRKTKVNHIEQKRLSAYIGQLNVILFAPEDLSLVKGSPQVRRKFIDMELGQVSPIYLYDLVQYQSVLKQRNQYLKQLAEKKQTDTVYLDILTEQLAEFGGKVLYARLGFLKKLEHWANLLHQKISHGRETLTIDYASSIPIDNTDLSLEALQNQLLQQLMNNRKRELFKANTFLGPHRDDLLFIVNGQNVQTYGSQGQQRTTALSIKLAEIDLMHSETGEYPVLLLDDVMSELDNERQIHLLETIEGKVQTFLTTTSLDHIKDKLTVEPDIFYVQQGKIERNSAT.

Position 30–37 (30–37 (GENAQGKT)) interacts with ATP.

This sequence belongs to the RecF family.

It localises to the cytoplasm. Functionally, the RecF protein is involved in DNA metabolism; it is required for DNA replication and normal SOS inducibility. RecF binds preferentially to single-stranded, linear DNA. It also seems to bind ATP. This chain is DNA replication and repair protein RecF, found in Enterococcus faecalis (strain ATCC 700802 / V583).